A 64-amino-acid polypeptide reads, in one-letter code: Large ribosomal subunit protein bL35 (64 aa).

It belongs to the bacterial ribosomal protein bL35 family.

This chain is Large ribosomal subunit protein bL35, found in Coxiella burnetii (strain RSA 493 / Nine Mile phase I).